The sequence spans 359 residues: NADPH HC-toxin reductase 2 (359 aa).

NADP(+) contacts are provided by residues arginine 39, 67 to 68 (DL), 87 to 89 (VAT), tyrosine 177, lysine 181, 206 to 209 (LGLV), and threonine 221. The active-site Proton donor is lysine 181.

This sequence belongs to the NAD(P)-dependent epimerase/dehydratase family.

In tandem with Hm1, NADPH-dependent HC toxin reductase (HCTR), which inactivates HC toxin, a cyclic tetrapeptide produced by the fungus Cochliobolus carbonum to permit infection and acting as an inhibitor of host histone deacetylases (HDACs), thus conferring resistance against C.carbonum race 1 in resistant cultivars (e.g. cv. B73 and cv. Wisconsin 22). Catalyzes the production of 8-hydroxy derivative of HC-toxin via the reduction of the 8-keto group of 2-amino-9,10-epoxy-8-oxo-decanoic acid, an amino acid of the HC-toxin. This chain is NADPH HC-toxin reductase 2, found in Zea mays (Maize).